The sequence spans 398 residues: Yellow-related salivary protein SP04 (398 aa).

Positions 1–18 (MKWFLFLLSTIFVQGILG) are cleaved as a signal peptide. Residues 73 to 94 (TLTEIERKKHPERSPPLSKFSG) are disordered. Over residues 75-85 (TEIERKKHPER) the composition is skewed to basic and acidic residues.

Belongs to the major royal jelly protein family. In terms of tissue distribution, female salivary gland (at protein level).

The protein resides in the secreted. In terms of biological role, probably modulates blood feeding of sand flies on vertebrate species by binding and sequestering different mediators involved in the host response. Binds biogenic amines. Binds serotonin with high affinity. Binds histamine with low affinity. This chain is Yellow-related salivary protein SP04, found in Phlebotomus argentipes (Phlebotomine sand fly).